Consider the following 255-residue polypeptide: Taurine import ATP-binding protein TauB (255 aa).

One can recognise an ABC transporter domain in the interval 2-229 (LQISHLYADY…RFVAGESSRS (228 aa)). 34 to 41 (GPSGCGKT) contacts ATP.

Belongs to the ABC transporter superfamily. Taurine importer (TC 3.A.1.17.1) family. As to quaternary structure, the complex is composed of two ATP-binding proteins (TauB), two transmembrane proteins (TauC) and a solute-binding protein (TauA).

Its subcellular location is the cell inner membrane. It catalyses the reaction taurine(out) + ATP + H2O = taurine(in) + ADP + phosphate + H(+). Functionally, part of the ABC transporter complex TauABC involved in taurine import. Responsible for energy coupling to the transport system. The protein is Taurine import ATP-binding protein TauB of Escherichia coli (strain K12).